Reading from the N-terminus, the 444-residue chain is MPSIGLLSLGCPKNLVDSEVMLGLLRENNFTITNNEANADALIVNTCGFIESAKEESIRHIFELAQYKERGKCKALIVTGCLAQRYSKELLEEIPEIDVILGPGHVSNIVEVVNHALEGKDRHTRVEDLLYIYDEHSPRLLSTPSYTAYVKIAEGCDNRCAYCAIPDIRGKFRSRPIESIEAEVKDLVEKGVREIILIAQDTTRYGLDLYGEYRLDQLLERLGPIQGLQWIRLLYCYPNRFTDQLIKAMAENPNICKYIDLPMQHAANDILRAMKRPVTKQQARILIQKLRTEIPGIVIRTSFIVGFPGETEEHFKELLDFMEEVKFDRAGVFTYSQEEGTPAAEMPNQIHGRIKQERYHRAMKLQREISLSQNQKRIGQEIEVVVEEVTDQSKGVYTGRSSYDAPEIDGTVEFTSSRPLRIGDFVKVKINRALEYDLMGELAQ.

Positions 2-118 (PSIGLLSLGC…IVEVVNHALE (117 aa)) constitute an MTTase N-terminal domain. The [4Fe-4S] cluster site is built by Cys-11, Cys-47, Cys-81, Cys-156, Cys-160, and Cys-163. The Radical SAM core domain occupies 142–372 (STPSYTAYVK…MKLQREISLS (231 aa)). The region spanning 375–444 (QKRIGQEIEV…EYDLMGELAQ (70 aa)) is the TRAM domain.

The protein belongs to the methylthiotransferase family. RimO subfamily. [4Fe-4S] cluster is required as a cofactor.

The protein localises to the cytoplasm. It catalyses the reaction L-aspartate(89)-[ribosomal protein uS12]-hydrogen + (sulfur carrier)-SH + AH2 + 2 S-adenosyl-L-methionine = 3-methylsulfanyl-L-aspartate(89)-[ribosomal protein uS12]-hydrogen + (sulfur carrier)-H + 5'-deoxyadenosine + L-methionine + A + S-adenosyl-L-homocysteine + 2 H(+). In terms of biological role, catalyzes the methylthiolation of an aspartic acid residue of ribosomal protein uS12. The sequence is that of Ribosomal protein uS12 methylthiotransferase RimO from Desulforamulus reducens (strain ATCC BAA-1160 / DSM 100696 / MI-1) (Desulfotomaculum reducens).